The sequence spans 178 residues: Outer envelope pore protein 16-2, chloroplastic (178 aa).

The tract at residues 1–102 (MEKSGGRIVM…DALVKNTGKE (102 aa)) is contains beta strands. A helical membrane pass occupies residues 103 to 119 (SLQWGLAAGLYSGITYG).

The protein belongs to the Tim17/Tim22/Tim23 family. Plastid outer envelope porin OEP16 (TC 1.B.30) subfamily. As to quaternary structure, homodimer and oligomers in membrane. In terms of tissue distribution, detected in pollen and seeds. Present in leaves and cotyledons.

It is found in the plastid. It localises to the chloroplast outer membrane. Its function is as follows. Voltage-dependent high-conductance channel with a slight cation-selectivity; selective for amino acids but excludes triosephosphates or uncharged sugars. Non-essential amino acid-selective channel protein and translocation pore for NADPH:protochlorophyllide oxidoreductase A (PORA) and possibly PORB. This Arabidopsis thaliana (Mouse-ear cress) protein is Outer envelope pore protein 16-2, chloroplastic (OEP162).